The chain runs to 178 residues: Large ribosomal subunit protein uL6 (178 aa).

It belongs to the universal ribosomal protein uL6 family. As to quaternary structure, part of the 50S ribosomal subunit.

Its function is as follows. This protein binds to the 23S rRNA, and is important in its secondary structure. It is located near the subunit interface in the base of the L7/L12 stalk, and near the tRNA binding site of the peptidyltransferase center. In Limosilactobacillus fermentum (strain NBRC 3956 / LMG 18251) (Lactobacillus fermentum), this protein is Large ribosomal subunit protein uL6.